We begin with the raw amino-acid sequence, 78 residues long: D-alanyl carrier protein (78 aa).

The 78-residue stretch at 1 to 78 (MEFKNQVYGI…HIAEQLAEMK (78 aa)) folds into the Carrier domain. S36 carries the O-(pantetheine 4'-phosphoryl)serine modification.

This sequence belongs to the DltC family. 4'-phosphopantetheine is transferred from CoA to a specific serine of apo-DCP.

It is found in the cytoplasm. It participates in cell wall biogenesis; lipoteichoic acid biosynthesis. In terms of biological role, carrier protein involved in the D-alanylation of lipoteichoic acid (LTA). The loading of thioester-linked D-alanine onto DltC is catalyzed by D-alanine--D-alanyl carrier protein ligase DltA. The DltC-carried D-alanyl group is further transferred to cell membrane phosphatidylglycerol (PG) by forming an ester bond, probably catalyzed by DltD. D-alanylation of LTA plays an important role in modulating the properties of the cell wall in Gram-positive bacteria, influencing the net charge of the cell wall. The polypeptide is D-alanyl carrier protein (Bacillus pumilus (strain SAFR-032)).